A 336-amino-acid chain; its full sequence is Galactinol synthase 6 (336 aa).

Lys-106 is a catalytic residue. Asp-122, Asp-124, and His-260 together coordinate Mn(2+).

It belongs to the glycosyltransferase 8 family. Galactosyltransferase subfamily. Requires a divalent metal cation as cofactor.

The protein localises to the cytoplasm. The catalysed reaction is myo-inositol + UDP-alpha-D-galactose = alpha-D-galactosyl-(1-&gt;3)-1D-myo-inositol + UDP + H(+). Its function is as follows. Galactinol synthase involved in the biosynthesis of raffinose family oligosaccharides (RFOs) that function as osmoprotectants. May promote plant stress tolerance. This is Galactinol synthase 6 (GOLS6) from Arabidopsis thaliana (Mouse-ear cress).